A 304-amino-acid polypeptide reads, in one-letter code: Agmatinase (304 aa).

Mn(2+) contacts are provided by histidine 126, aspartate 149, histidine 151, aspartate 153, aspartate 230, and aspartate 232.

Belongs to the arginase family. Agmatinase subfamily. Mn(2+) serves as cofactor.

The enzyme catalyses agmatine + H2O = urea + putrescine. It participates in amine and polyamine biosynthesis; putrescine biosynthesis via agmatine pathway; putrescine from agmatine: step 1/1. In terms of biological role, catalyzes the formation of putrescine from agmatine. This chain is Agmatinase, found in Edwardsiella ictaluri (strain 93-146).